We begin with the raw amino-acid sequence, 171 residues long: Ribosome maturation factor RimM (171 aa).

The PRC barrel domain maps to 97–170 (EGEYYYHEII…LVTIHVMEGL (74 aa)).

It belongs to the RimM family. In terms of assembly, binds ribosomal protein uS19.

Its subcellular location is the cytoplasm. Its function is as follows. An accessory protein needed during the final step in the assembly of 30S ribosomal subunit, possibly for assembly of the head region. Essential for efficient processing of 16S rRNA. May be needed both before and after RbfA during the maturation of 16S rRNA. It has affinity for free ribosomal 30S subunits but not for 70S ribosomes. The polypeptide is Ribosome maturation factor RimM (Bacillus cereus (strain ZK / E33L)).